A 648-amino-acid polypeptide reads, in one-letter code: 60 kDa heat shock protein homolog 1, mitochondrial (648 aa).

A mitochondrion-targeting transit peptide spans 1–55 (MFRSCVPKAITSSRCFARMYSKDVRFGSGVRAMMIRGVDILADAVAVTMGPKGRS).

It belongs to the chaperonin (HSP60) family.

It is found in the mitochondrion matrix. In terms of biological role, prevents misfolding and promotes the refolding and proper assembly of unfolded polypeptides generated under stress conditions. This chain is 60 kDa heat shock protein homolog 1, mitochondrial (Hsp60B), found in Drosophila melanogaster (Fruit fly).